The following is an 86-amino-acid chain: MRHYDCKNYINLDCEKGLCALTKGMVPIDGEGSEACPNFKPAEKCGNCKNFCNPDKYGLGTCTGLEKENWAYATCGASACPSYKAE.

Positions 3, 6, 19, 36, 45, 48, 62, and 80 each coordinate [4Fe-4S] cluster.

Belongs to the HPA decarboxylase small subunit family. Heterooctamer consisting of 4 large (HpdB) subunits and 4 small (HpdC) subunits, arranged as a tetramer of heterodimers. Requires [4Fe-4S] cluster as cofactor.

The enzyme catalyses 4-hydroxyphenylacetate + H(+) = 4-methylphenol + CO2. It catalyses the reaction 3,4-dihydroxyphenylacetate + H(+) = 4-methylcatechol + CO2. In terms of biological role, component of the HPA decarboxylase that decarboxylates phenylacetates with a hydroxyl group in the p-position. Active toward 4-hydroxyphenylacetate and 3,4-dihydroxyphenylacetate, forming 4-methylphenol and 4-methylcatechol, respectively. Is likely involved in the catabolism of aromatic amino acids such as tyrosine fermentation. 4-methylphenol (p-cresol) formation provides metabolic toxicity, which allows an active suppression of other microbes and may provide growth advantages for the producers in highly competitive environments. The small subunit is essential for enzymatic activity of HPA decarboxylase, and also seems to be involved in the regulation of the enzyme oligomeric state and catalytic activity. This Clostridium scatologenes protein is 4-hydroxyphenylacetate decarboxylase small subunit.